A 333-amino-acid polypeptide reads, in one-letter code: D-alanine--D-alanine ligase (333 aa).

The ATP-grasp domain maps to 124–329; it reads KMWFSALGIP…FTEYLYSNIK (206 aa). 154-209 is an ATP binding site; sequence ALETWGSVFIKAASQGSSVGCYRVDSIDELASSLKEAFSYSPYVVVEKTIHARELE. Residues Asp283, Glu296, and Asn298 each contribute to the Mg(2+) site.

This sequence belongs to the D-alanine--D-alanine ligase family. Mg(2+) is required as a cofactor. Mn(2+) serves as cofactor.

It is found in the cytoplasm. It carries out the reaction 2 D-alanine + ATP = D-alanyl-D-alanine + ADP + phosphate + H(+). It functions in the pathway cell wall biogenesis; peptidoglycan biosynthesis. Cell wall formation. The chain is D-alanine--D-alanine ligase from Shewanella sediminis (strain HAW-EB3).